We begin with the raw amino-acid sequence, 316 residues long: Acetyl-coenzyme A carboxylase carboxyl transferase subunit alpha (316 aa).

The CoA carboxyltransferase C-terminal domain maps to 36–290; it reads KLEQKLDSLK…KQFLVEQLHI (255 aa).

It belongs to the AccA family. Acetyl-CoA carboxylase is a heterohexamer composed of biotin carboxyl carrier protein (AccB), biotin carboxylase (AccC) and two subunits each of ACCase subunit alpha (AccA) and ACCase subunit beta (AccD).

The protein localises to the cytoplasm. The catalysed reaction is N(6)-carboxybiotinyl-L-lysyl-[protein] + acetyl-CoA = N(6)-biotinyl-L-lysyl-[protein] + malonyl-CoA. Its pathway is lipid metabolism; malonyl-CoA biosynthesis; malonyl-CoA from acetyl-CoA: step 1/1. Its function is as follows. Component of the acetyl coenzyme A carboxylase (ACC) complex. First, biotin carboxylase catalyzes the carboxylation of biotin on its carrier protein (BCCP) and then the CO(2) group is transferred by the carboxyltransferase to acetyl-CoA to form malonyl-CoA. This chain is Acetyl-coenzyme A carboxylase carboxyl transferase subunit alpha, found in Protochlamydia amoebophila (strain UWE25).